A 209-amino-acid polypeptide reads, in one-letter code: Mei4-dependent protein 1 (209 aa).

A signal peptide spans 1–22 (MLHATQLCYLLLFCFLPISISS).

It localises to the secreted. The protein is Mei4-dependent protein 1 (mde1) of Schizosaccharomyces pombe (strain 972 / ATCC 24843) (Fission yeast).